The chain runs to 327 residues: S-adenosylmethionine/S-adenosylhomocysteine transporter (327 aa).

10 consecutive transmembrane segments (helical) span residues 22-42 (CDMA…SFAL), 53-73 (LFVT…LLLC), 85-105 (IMPI…LEFI), 114-134 (TACF…YVQL), 143-163 (LGGL…GGSE), 165-185 (VAEW…ATCL), 202-222 (SLSM…LSLI), 240-260 (LFLQ…YNLF), 271-291 (FLSF…WLLL), and 294-314 (SFPP…RLIY). Residues 34–157 (FIWSSSFALS…LGLVSYLVYL (124 aa)) enclose the EamA 1 domain. The 125-residue stretch at 189 to 313 (GWTLLRKLGR…GFMVLGCRLI (125 aa)) folds into the EamA 2 domain.

This sequence belongs to the drug/metabolite transporter (DMT) superfamily. 10 TMS drug/metabolite exporter (DME) (TC 2.A.7.3) family.

The protein resides in the cell membrane. Transports S-adenosylmethionine (SAM) and S-adenosylhomocysteine (SAH). Allows bacteria to acquire SAM from the eukaryotic host cell and to likely remove the toxic by-product SAH. This Chlamydia trachomatis serovar D (strain ATCC VR-885 / DSM 19411 / UW-3/Cx) protein is S-adenosylmethionine/S-adenosylhomocysteine transporter.